The chain runs to 524 residues: Cytokinin dehydrogenase 4 (524 aa).

Positions 1–26 (MTNTLCLSLITLITLFISLTPTLIKS) are cleaved as a signal peptide. Residues Asn-39 and Asn-58 are each glycosylated (N-linked (GlcNAc...) asparagine). An FAD-binding PCMH-type domain is found at 60–249 (TDENPGAVLC…TRARIALDHA (190 aa)). The FAD site is built by Ala-104, Gly-106, and Gly-108. Pros-8alpha-FAD histidine is present on His-109. FAD is bound by residues Ser-110 and Gln-114. Asn-124 carries an N-linked (GlcNAc...) asparagine glycan. Residues Asp-173, Ser-178, Ser-184, Ile-188, and Ile-239 each contribute to the FAD site. Residue Asn-411 is glycosylated (N-linked (GlcNAc...) asparagine). FAD-binding residues include Tyr-482, Ser-517, and Gln-520.

Belongs to the oxygen-dependent FAD-linked oxidoreductase family. FAD serves as cofactor. As to expression, expressed in trichomes and in developing stomata of young growing leaves. Strong expression in stipules and in the root cap, but not detected in the root meristem.

The protein localises to the secreted. Its subcellular location is the extracellular space. It catalyses the reaction N(6)-dimethylallyladenine + A + H2O = 3-methyl-2-butenal + adenine + AH2. In terms of biological role, catalyzes the oxidation of cytokinins, a family of N(6)-substituted adenine derivatives that are plant hormones, where the substituent is an isopentenyl group. This chain is Cytokinin dehydrogenase 4 (CKX4), found in Arabidopsis thaliana (Mouse-ear cress).